A 152-amino-acid polypeptide reads, in one-letter code: Transcriptional repressor NrdR (152 aa).

A zinc finger spans residues 3-34 (CPKCGSLNDKVVDTRQSKDGTVIRRRRECLDC). Residues 49–139 (IVVKKKNGTT…VYNEFQDIKD (91 aa)) form the ATP-cone domain.

Belongs to the NrdR family. Requires Zn(2+) as cofactor.

Functionally, negatively regulates transcription of bacterial ribonucleotide reductase nrd genes and operons by binding to NrdR-boxes. The polypeptide is Transcriptional repressor NrdR (Persephonella marina (strain DSM 14350 / EX-H1)).